A 121-amino-acid chain; its full sequence is uncharacterized protein (121 aa).

Positions 1–19 are cleaved as a signal peptide; sequence MKKFALATIFALATTSAFA.

To E.coli YgiW.

The protein resides in the periplasm. This is an uncharacterized protein from Haemophilus influenzae (strain ATCC 51907 / DSM 11121 / KW20 / Rd).